The primary structure comprises 213 residues: Heat shock protein 27 (213 aa).

Phosphoserine occurs at positions 58 and 75. The 112-residue stretch at 71–182 (SRRASGGPNA…SERIVQIQQT (112 aa)) folds into the sHSP domain. The interval 157-213 (VLTLKAPPPPSKEQAKSERIVQIQQTGPAHLSVKAPAPEAGDGKAENGSGEKMETSK) is disordered. The segment covering 197-213 (GDGKAENGSGEKMETSK) has biased composition (basic and acidic residues).

Belongs to the small heat shock protein (HSP20) family.

This is Heat shock protein 27 (Hsp27) from Drosophila melanogaster (Fruit fly).